Here is an 848-residue protein sequence, read N- to C-terminus: DNA mismatch repair protein MutS (848 aa).

605 to 612 (GPNMAGKS) contributes to the ATP binding site.

It belongs to the DNA mismatch repair MutS family.

This protein is involved in the repair of mismatches in DNA. It is possible that it carries out the mismatch recognition step. This protein has a weak ATPase activity. This Leptospira borgpetersenii serovar Hardjo-bovis (strain JB197) protein is DNA mismatch repair protein MutS.